A 302-amino-acid chain; its full sequence is MALLISLPGGTPAMAQILLLLSSACLHAGNSERSNRKNGFGVNQPESCSGVQGGSIDIPFSFYFPWKLAKDPQMSIAWRWKDFHGEFIYNSSLPFIHEHFKGRLILNWTQGQTSGVLRILNLKESDQTRYFGRVFLQTTEGIQFWQSIPGTQLNVTNATCTPTTLPSTTAATSAHTQNDITEVKSANIGGLDLQTTVGLATAAAVFLVGVLGLIVFLWWKRRRQGQKTKAEIPAREPLETSEKHESVGHEGQCMDPKENPKDNNIVYASISLSSPTSPGTAPNLPVHGNPQEETVYSIVKAK.

Residues 1–31 (MALLISLPGGTPAMAQILLLLSSACLHAGNS) form the signal peptide. Residues 32 to 198 (ERSNRKNGFG…GGLDLQTTVG (167 aa)) lie on the Extracellular side of the membrane. Residues Asn90 and Asn107 are each glycosylated (N-linked (GlcNAc...) asparagine). Residues 199 to 219 (LATAAAVFLVGVLGLIVFLWW) form a helical membrane-spanning segment. Residues 220–302 (KRRRQGQKTK…ETVYSIVKAK (83 aa)) lie on the Cytoplasmic side of the membrane. Residues 228 to 248 (TKAEIPAREPLETSEKHESVG) show a composition bias toward basic and acidic residues. The tract at residues 228-293 (TKAEIPAREP…LPVHGNPQEE (66 aa)) is disordered. 2 consecutive short sequence motifs (ITIM motif) follow at residues 265–270 (IVYASI) and 294–299 (TVYSIV). The span at 270 to 280 (ISLSSPTSPGT) shows a compositional bias: polar residues.

Interacts with CD99. Phosphorylated on tyrosine residues.

The protein resides in the membrane. Its function is as follows. Paired receptors consist of highly related activating and inhibitory receptors and are widely involved in the regulation of the immune system. Receptor for CD99 and PIANP. This chain is Paired immunoglobulin-like type 2 receptor alpha (Pilra), found in Mus musculus (Mouse).